Consider the following 351-residue polypeptide: Fe-S cluster assembly protein DRE2 (351 aa).

An N-terminal SAM-like domain region spans residues 1–151; it reads MATTGRVLLL…KPDIGAQQAI (151 aa). Disordered regions lie at residues 93–118 and 157–186; these read RNRENKPWGLSDGNGSNANSSRRYND and RRRKEKEKTDTLASSANYSTNGTVGAPSSN. Polar residues-rich tracts occupy residues 105-114 and 167-186; these read GNGSNANSSR and TLASSANYSTNGTVGAPSSN. The tract at residues 152-243 is linker; that stretch reads PLKLSRRRKE…EDELLDEDDM (92 aa). [2Fe-2S] cluster is bound by residues Cys-253, Cys-264, Cys-267, and Cys-269. The segment at 253-269 is fe-S binding site A; the sequence is CRPKPGKRRRACKDCSC. [4Fe-4S] cluster-binding residues include Cys-314, Cys-317, Cys-325, and Cys-328. 2 consecutive short sequence motifs (cx2C motif) follow at residues 314–317 and 325–328; these read CGNC and CDGC. A fe-S binding site B region spans residues 314 to 328; it reads CGNCSLGDAFRCDGC.

The protein belongs to the anamorsin family. Monomer. Interacts with TAH18. Interacts with MIA40. [2Fe-2S] cluster is required as a cofactor. The cofactor is [4Fe-4S] cluster.

It localises to the cytoplasm. The protein resides in the mitochondrion intermembrane space. Functionally, component of the cytosolic iron-sulfur (Fe-S) protein assembly (CIA) machinery required for the maturation of extramitochondrial Fe-S proteins. Part of an electron transfer chain functioning in an early step of cytosolic Fe-S biogenesis, facilitating the de novo assembly of a [4Fe-4S] cluster on the scaffold complex CFD1-NBP35. Electrons are transferred to DRE2 from NADPH via the FAD- and FMN-containing protein TAH18. TAH18-DRE2 are also required for the assembly of the diferric tyrosyl radical cofactor of ribonucleotide reductase (RNR), probably by providing electrons for reduction during radical cofactor maturation in the catalytic small subunit RNR2. The sequence is that of Fe-S cluster assembly protein DRE2 from Ajellomyces capsulatus (strain NAm1 / WU24) (Darling's disease fungus).